The following is a 152-amino-acid chain: D-aminoacyl-tRNA deacylase (152 aa).

The Gly-cisPro motif, important for rejection of L-amino acids motif lies at 142-143; sequence GP.

This sequence belongs to the DTD family. Homodimer.

Its subcellular location is the cytoplasm. The catalysed reaction is glycyl-tRNA(Ala) + H2O = tRNA(Ala) + glycine + H(+). It catalyses the reaction a D-aminoacyl-tRNA + H2O = a tRNA + a D-alpha-amino acid + H(+). In terms of biological role, an aminoacyl-tRNA editing enzyme that deacylates mischarged D-aminoacyl-tRNAs. Also deacylates mischarged glycyl-tRNA(Ala), protecting cells against glycine mischarging by AlaRS. Acts via tRNA-based rather than protein-based catalysis; rejects L-amino acids rather than detecting D-amino acids in the active site. By recycling D-aminoacyl-tRNA to D-amino acids and free tRNA molecules, this enzyme counteracts the toxicity associated with the formation of D-aminoacyl-tRNA entities in vivo and helps enforce protein L-homochirality. The sequence is that of D-aminoacyl-tRNA deacylase from Burkholderia cenocepacia (strain ATCC BAA-245 / DSM 16553 / LMG 16656 / NCTC 13227 / J2315 / CF5610) (Burkholderia cepacia (strain J2315)).